Reading from the N-terminus, the 320-residue chain is ATP-dependent 6-phosphofructokinase (320 aa).

Glycine 12 provides a ligand contact to ATP. 22–26 (RGVVR) provides a ligand contact to ADP. Residues 73–74 (RF) and 103–106 (GDGS) each bind ATP. Residue aspartate 104 participates in Mg(2+) binding. Residue 126–128 (TID) participates in substrate binding. The active-site Proton acceptor is aspartate 128. Arginine 155 is a binding site for ADP. Substrate contacts are provided by residues arginine 163 and 170–172 (MGR). ADP contacts are provided by residues 186-188 (GCE), lysine 212, and 214-216 (KKH). Residues glutamate 223, arginine 244, and 250–253 (HIQR) each bind substrate.

This sequence belongs to the phosphofructokinase type A (PFKA) family. ATP-dependent PFK group I subfamily. Prokaryotic clade 'B1' sub-subfamily. As to quaternary structure, homotetramer. It depends on Mg(2+) as a cofactor.

The protein localises to the cytoplasm. It carries out the reaction beta-D-fructose 6-phosphate + ATP = beta-D-fructose 1,6-bisphosphate + ADP + H(+). Its pathway is carbohydrate degradation; glycolysis; D-glyceraldehyde 3-phosphate and glycerone phosphate from D-glucose: step 3/4. Its activity is regulated as follows. Allosterically activated by ADP and other diphosphonucleosides, and allosterically inhibited by phosphoenolpyruvate. Its function is as follows. Catalyzes the phosphorylation of D-fructose 6-phosphate to fructose 1,6-bisphosphate by ATP, the first committing step of glycolysis. The polypeptide is ATP-dependent 6-phosphofructokinase (Aliivibrio salmonicida (strain LFI1238) (Vibrio salmonicida (strain LFI1238))).